The sequence spans 292 residues: Non-homologous end joining protein Ku (292 aa).

The 185-residue stretch at 12–196 folds into the Ku domain; it reads KLSLVTCPVV…KITKDMVELA (185 aa). The interval 231 to 292 is disordered; that stretch reads KPIKLPEPEE…RSAARQRKAG (62 aa). Residues 271-292 are compositionally biased toward basic residues; that stretch reads APAHRRPAKKAHRSAARQRKAG.

It belongs to the prokaryotic Ku family. As to quaternary structure, homodimer. Interacts with LigD.

Functionally, with LigD forms a non-homologous end joining (NHEJ) DNA repair enzyme, which repairs dsDNA breaks with reduced fidelity. Binds linear dsDNA with 5'- and 3'- overhangs but not closed circular dsDNA nor ssDNA. Recruits and stimulates the ligase activity of LigD. The sequence is that of Non-homologous end joining protein Ku from Bradyrhizobium sp. (strain ORS 278).